The primary structure comprises 487 residues: Phenylalanine--tRNA ligase alpha subunit (487 aa).

Residues threonine 319, 361–363 (QVE), and tyrosine 401 each bind L-phenylalanine. Residue glutamate 403 coordinates Mg(2+). Phenylalanine 427 lines the L-phenylalanine pocket.

This sequence belongs to the class-II aminoacyl-tRNA synthetase family. Phe-tRNA synthetase alpha subunit type 2 subfamily. Tetramer of two alpha and two beta subunits. The cofactor is Mg(2+).

The protein localises to the cytoplasm. It carries out the reaction tRNA(Phe) + L-phenylalanine + ATP = L-phenylalanyl-tRNA(Phe) + AMP + diphosphate + H(+). The protein is Phenylalanine--tRNA ligase alpha subunit (phesA) of Dictyostelium discoideum (Social amoeba).